Consider the following 297-residue polypeptide: Phosphoribosylaminoimidazole-succinocarboxamide synthase (297 aa).

The protein belongs to the SAICAR synthetase family.

It catalyses the reaction 5-amino-1-(5-phospho-D-ribosyl)imidazole-4-carboxylate + L-aspartate + ATP = (2S)-2-[5-amino-1-(5-phospho-beta-D-ribosyl)imidazole-4-carboxamido]succinate + ADP + phosphate + 2 H(+). It functions in the pathway purine metabolism; IMP biosynthesis via de novo pathway; 5-amino-1-(5-phospho-D-ribosyl)imidazole-4-carboxamide from 5-amino-1-(5-phospho-D-ribosyl)imidazole-4-carboxylate: step 1/2. The protein is Phosphoribosylaminoimidazole-succinocarboxamide synthase of Mycobacterium tuberculosis (strain ATCC 25177 / H37Ra).